The chain runs to 404 residues: Exodeoxyribonuclease 7 large subunit (404 aa).

The protein belongs to the XseA family. In terms of assembly, heterooligomer composed of large and small subunits.

The protein localises to the cytoplasm. It catalyses the reaction Exonucleolytic cleavage in either 5'- to 3'- or 3'- to 5'-direction to yield nucleoside 5'-phosphates.. Functionally, bidirectionally degrades single-stranded DNA into large acid-insoluble oligonucleotides, which are then degraded further into small acid-soluble oligonucleotides. The chain is Exodeoxyribonuclease 7 large subunit from Ruminiclostridium cellulolyticum (strain ATCC 35319 / DSM 5812 / JCM 6584 / H10) (Clostridium cellulolyticum).